Consider the following 252-residue polypeptide: Sulfate transporter CysZ (252 aa).

5 helical membrane passes run 29–49 (FVLL…FYIF), 66–86 (FLSW…LATF), 141–160 (LVYI…IPAL), 164–186 (VAPF…DYPF), and 212–232 (ALVS…PVAV).

This sequence belongs to the CysZ family.

The protein resides in the cell inner membrane. In terms of biological role, high affinity, high specificity proton-dependent sulfate transporter, which mediates sulfate uptake. Provides the sulfur source for the cysteine synthesis pathway. The chain is Sulfate transporter CysZ from Vibrio atlanticus (strain LGP32) (Vibrio splendidus (strain Mel32)).